The following is a 34-amino-acid chain: Photosystem II reaction center protein M (34 aa).

Residues 5-25 (ILAVIATALFVLIPTAFLLIL) form a helical membrane-spanning segment.

This sequence belongs to the PsbM family. PSII is composed of 1 copy each of membrane proteins PsbA, PsbB, PsbC, PsbD, PsbE, PsbF, PsbH, PsbI, PsbJ, PsbK, PsbL, PsbM, PsbT, PsbX, PsbY, PsbZ, Psb30/Ycf12, at least 3 peripheral proteins of the oxygen-evolving complex and a large number of cofactors. It forms dimeric complexes.

It localises to the plastid. Its subcellular location is the chloroplast thylakoid membrane. In terms of biological role, one of the components of the core complex of photosystem II (PSII). PSII is a light-driven water:plastoquinone oxidoreductase that uses light energy to abstract electrons from H(2)O, generating O(2) and a proton gradient subsequently used for ATP formation. It consists of a core antenna complex that captures photons, and an electron transfer chain that converts photonic excitation into a charge separation. This subunit is found at the monomer-monomer interface. The polypeptide is Photosystem II reaction center protein M (Chaetosphaeridium globosum (Charophycean green alga)).